The sequence spans 270 residues: uncharacterized protein (270 aa).

Positions 1 to 22 are cleaved as a signal peptide; that stretch reads MEYIKKIALYMSVLLLIIFIGG. Cys-23 is lipidated: N-palmitoyl cysteine. The S-diacylglycerol cysteine moiety is linked to residue Cys-23.

This sequence belongs to the staphylococcal tandem lipoprotein family.

The protein localises to the cell membrane. This is an uncharacterized protein from Staphylococcus aureus (strain USA300).